The following is a 313-amino-acid chain: 4-diphosphocytidyl-2-C-methyl-D-erythritol kinase (313 aa).

The active site involves K10. 95–105 (PVTAGLGGGSS) serves as a coordination point for ATP. D136 is an active-site residue. Residues 289–313 (HPRVSPWRSPRSASSRSTRRSSRPT) form a disordered region. Over residues 292–304 (VSPWRSPRSASSR) the composition is skewed to low complexity.

Belongs to the GHMP kinase family. IspE subfamily.

The enzyme catalyses 4-CDP-2-C-methyl-D-erythritol + ATP = 4-CDP-2-C-methyl-D-erythritol 2-phosphate + ADP + H(+). It functions in the pathway isoprenoid biosynthesis; isopentenyl diphosphate biosynthesis via DXP pathway; isopentenyl diphosphate from 1-deoxy-D-xylulose 5-phosphate: step 3/6. Its function is as follows. Catalyzes the phosphorylation of the position 2 hydroxy group of 4-diphosphocytidyl-2C-methyl-D-erythritol. In Anaeromyxobacter dehalogenans (strain 2CP-1 / ATCC BAA-258), this protein is 4-diphosphocytidyl-2-C-methyl-D-erythritol kinase.